Reading from the N-terminus, the 816-residue chain is Phosphatidylinositol 4-kinase beta (816 aa).

3 disordered regions span residues 1–30, 101–120, and 248–318; these read MGDT…GSLL, EDEM…RRRR, and AHRK…SFSS. An N-acetylglycine modification is found at Gly-2. Positions 2–68 are interaction with ACBD3; sequence GDTIVEPAPL…VKLLHGGVAI (67 aa). Residues 29–242 enclose the PIK helical domain; the sequence is LLSVITEGVG…GTKLRKLILS (214 aa). Phosphoserine is present on Ser-258. Thr-263 is modified (phosphothreonine). Residues Ser-266, Ser-275, Ser-277, Ser-284, and Ser-294 each carry the phosphoserine modification. Polar residues-rich tracts occupy residues 278–297 and 306–318; these read DATA…SNPK and SSST…SFSS. Phosphoserine is present on Ser-428. Phosphothreonine is present on Thr-438. Ser-511 is modified (phosphoserine). Residues Thr-517 and Thr-519 each carry the phosphothreonine modification. In terms of domain architecture, PI3K/PI4K catalytic spans 535–801; the sequence is EPWQEKVRRI…MVDGSMRSIT (267 aa). The segment at 541 to 547 is G-loop; that stretch reads VRRIREG. The tract at residues 668–676 is catalytic loop; sequence QVKDRHNGN. An activation loop region spans residues 687–711; the sequence is HIDFGFILSSSPRNLGFETSAFKLT.

Belongs to the PI3/PI4-kinase family. Type III PI4K subfamily. As to quaternary structure, interacts with ARF1 and ARF3 in the Golgi complex, but not with ARF4, ARF5 or ARF6. Interacts with NCS1/FREQ in a calcium-independent manner. Interacts with CALN1/CABP8 and CALN2/CABP7; in a calcium-dependent manner; this interaction competes with NCS1/FREQ binding. Interacts with ACBD3. Interacts with ARMH3, YWHAB, YWHAE, YWHAG, YWHAH, YWHAQ, YWHAZ and SFN. Interacts with GGA2 (via VHS domain); the interaction is important for PI4KB location at the Golgi apparatus membrane. Interacts with ATG9A. It depends on Mg(2+) as a cofactor. Requires Mn(2+) as cofactor.

Its subcellular location is the endomembrane system. It localises to the mitochondrion outer membrane. The protein resides in the rough endoplasmic reticulum membrane. It is found in the golgi apparatus. The protein localises to the golgi apparatus membrane. The enzyme catalyses a 1,2-diacyl-sn-glycero-3-phospho-(1D-myo-inositol) + ATP = a 1,2-diacyl-sn-glycero-3-phospho-(1D-myo-inositol 4-phosphate) + ADP + H(+). With respect to regulation, inhibited by wortmannin. Increased kinase activity upon interaction with NCS1/FREQ. Its function is as follows. Phosphorylates phosphatidylinositol (PI) in the first committed step in the production of the second messenger inositol-1,4,5,-trisphosphate (PIP). May regulate Golgi disintegration/reorganization during mitosis, possibly via its phosphorylation. Involved in Golgi-to-plasma membrane trafficking. This chain is Phosphatidylinositol 4-kinase beta (PI4KB), found in Bos taurus (Bovine).